Reading from the N-terminus, the 204-residue chain is MQKLTPRQAEILSFIKRCLEDHGFPPTRAEIAQELGFKSPNAAEEHLKALARKGAIEMTPGASRGIRIPGFEPHAANDDEGLPVIGRVAAGAPILAEQNIEESCRINPAFFNPRADYLLRVRGMSMKDIGILDGDLLAVHVTREARNGQVVVARIGEEVTVKRFKREGSKVWLLAENPEFAPIEVDLKEQELIIEGLSVGVIRR.

The H-T-H motif DNA-binding region spans 28 to 48 (RAEIAQELGFKSPNAAEEHLK). Residues serine 125 and lysine 162 each act as for autocatalytic cleavage activity in the active site.

Belongs to the peptidase S24 family. As to quaternary structure, homodimer.

It carries out the reaction Hydrolysis of Ala-|-Gly bond in repressor LexA.. Functionally, represses a number of genes involved in the response to DNA damage (SOS response), including recA and lexA. In the presence of single-stranded DNA, RecA interacts with LexA causing an autocatalytic cleavage which disrupts the DNA-binding part of LexA, leading to derepression of the SOS regulon and eventually DNA repair. This is LexA repressor from Pseudomonas aeruginosa (strain LESB58).